A 30-amino-acid chain; its full sequence is Dermaseptin-J10 (30 aa).

As to expression, expressed by the skin glands.

The protein localises to the secreted. Its function is as follows. Has antimicrobial activity. This is Dermaseptin-J10 from Phasmahyla jandaia (Jandaia leaf frog).